We begin with the raw amino-acid sequence, 240 residues long: Ribonuclease PH (240 aa).

Phosphate-binding positions include arginine 87 and 125–127; that span reads GTR.

It belongs to the RNase PH family. Homohexameric ring arranged as a trimer of dimers.

It carries out the reaction tRNA(n+1) + phosphate = tRNA(n) + a ribonucleoside 5'-diphosphate. Its function is as follows. Phosphorolytic 3'-5' exoribonuclease that plays an important role in tRNA 3'-end maturation. Removes nucleotide residues following the 3'-CCA terminus of tRNAs; can also add nucleotides to the ends of RNA molecules by using nucleoside diphosphates as substrates, but this may not be physiologically important. Probably plays a role in initiation of 16S rRNA degradation (leading to ribosome degradation) during starvation. The polypeptide is Ribonuclease PH (Crocosphaera subtropica (strain ATCC 51142 / BH68) (Cyanothece sp. (strain ATCC 51142))).